A 139-amino-acid polypeptide reads, in one-letter code: Small ribosomal subunit protein uS12 (139 aa).

A disordered region spans residues 1–21; it reads MPTINQLVRKGRKAVQEKSTA. D102 carries the post-translational modification 3-methylthioaspartic acid.

The protein belongs to the universal ribosomal protein uS12 family. In terms of assembly, part of the 30S ribosomal subunit. Contacts proteins S8 and S17. May interact with IF1 in the 30S initiation complex.

In terms of biological role, with S4 and S5 plays an important role in translational accuracy. Functionally, interacts with and stabilizes bases of the 16S rRNA that are involved in tRNA selection in the A site and with the mRNA backbone. Located at the interface of the 30S and 50S subunits, it traverses the body of the 30S subunit contacting proteins on the other side and probably holding the rRNA structure together. The combined cluster of proteins S8, S12 and S17 appears to hold together the shoulder and platform of the 30S subunit. The sequence is that of Small ribosomal subunit protein uS12 from Alkaliphilus metalliredigens (strain QYMF).